Here is a 154-residue protein sequence, read N- to C-terminus: Phosphopantetheine adenylyltransferase (154 aa).

Threonine 10 serves as a coordination point for substrate. ATP is bound by residues 10 to 11 (TF) and histidine 18. 3 residues coordinate substrate: lysine 42, leucine 74, and arginine 88. ATP contacts are provided by residues 89 to 91 (GLR), glutamate 99, and 124 to 130 (NAFISSS).

This sequence belongs to the bacterial CoaD family. In terms of assembly, homohexamer. Requires Mg(2+) as cofactor.

The protein localises to the cytoplasm. It carries out the reaction (R)-4'-phosphopantetheine + ATP + H(+) = 3'-dephospho-CoA + diphosphate. It functions in the pathway cofactor biosynthesis; coenzyme A biosynthesis; CoA from (R)-pantothenate: step 4/5. Its function is as follows. Reversibly transfers an adenylyl group from ATP to 4'-phosphopantetheine, yielding dephospho-CoA (dPCoA) and pyrophosphate. In Nautilia profundicola (strain ATCC BAA-1463 / DSM 18972 / AmH), this protein is Phosphopantetheine adenylyltransferase.